Consider the following 215-residue polypeptide: Orotate phosphoribosyltransferase (215 aa).

Lys26 contacts 5-phospho-alpha-D-ribose 1-diphosphate. 34–35 provides a ligand contact to orotate; the sequence is FF. 5-phospho-alpha-D-ribose 1-diphosphate contacts are provided by residues 72–73, Arg99, Lys100, Lys103, His105, and 124–132; these read YK and DDVITAGTA. Residues Thr128 and Arg156 each coordinate orotate.

This sequence belongs to the purine/pyrimidine phosphoribosyltransferase family. PyrE subfamily. As to quaternary structure, homodimer. Mg(2+) serves as cofactor.

It carries out the reaction orotidine 5'-phosphate + diphosphate = orotate + 5-phospho-alpha-D-ribose 1-diphosphate. It participates in pyrimidine metabolism; UMP biosynthesis via de novo pathway; UMP from orotate: step 1/2. Catalyzes the transfer of a ribosyl phosphate group from 5-phosphoribose 1-diphosphate to orotate, leading to the formation of orotidine monophosphate (OMP). In Stutzerimonas stutzeri (strain A1501) (Pseudomonas stutzeri), this protein is Orotate phosphoribosyltransferase.